The following is a 115-amino-acid chain: UPF0738 protein SERP0585 (115 aa).

It belongs to the UPF0738 family.

This is UPF0738 protein SERP0585 from Staphylococcus epidermidis (strain ATCC 35984 / DSM 28319 / BCRC 17069 / CCUG 31568 / BM 3577 / RP62A).